Here is a 159-residue protein sequence, read N- to C-terminus: Small ribosomal subunit protein uS9 (159 aa).

The protein belongs to the universal ribosomal protein uS9 family.

In Rickettsia massiliae (strain Mtu5), this protein is Small ribosomal subunit protein uS9.